The chain runs to 576 residues: Formate--tetrahydrofolate ligase 1 (576 aa).

ATP is bound at residue 69–76 (TPLGEGKT).

This sequence belongs to the formate--tetrahydrofolate ligase family.

The catalysed reaction is (6S)-5,6,7,8-tetrahydrofolate + formate + ATP = (6R)-10-formyltetrahydrofolate + ADP + phosphate. Its pathway is one-carbon metabolism; tetrahydrofolate interconversion. In Rubrobacter xylanophilus (strain DSM 9941 / JCM 11954 / NBRC 16129 / PRD-1), this protein is Formate--tetrahydrofolate ligase 1.